We begin with the raw amino-acid sequence, 854 residues long: Probable inorganic carbon transporter subunit DabA (854 aa).

Zn(2+) is bound by residues cysteine 378, aspartate 380, histidine 560, and cysteine 575.

This sequence belongs to the inorganic carbon transporter (TC 9.A.2) DabA family. Forms a complex with DabB. The cofactor is Zn(2+).

The protein resides in the cell membrane. Functionally, part of an energy-coupled inorganic carbon pump. The chain is Probable inorganic carbon transporter subunit DabA from Bacillus cereus (strain ATCC 14579 / DSM 31 / CCUG 7414 / JCM 2152 / NBRC 15305 / NCIMB 9373 / NCTC 2599 / NRRL B-3711).